Consider the following 802-residue polypeptide: Neuronal PAS domain-containing protein 4 (802 aa).

Residues 1 to 13 (MYRSTKGASKARR) form a basic motif; degenerate region. The bHLH domain occupies 1-53 (MYRSTKGASKARRDQINAEIRNLKELLPLAEADKVRLSYLHIMSLACIYTRKG). The stretch at 5 to 38 (TKGASKARRDQINAEIRNLKELLPLAEADKVRLS) forms a coiled coil. The segment at 14-53 (DQINAEIRNLKELLPLAEADKVRLSYLHIMSLACIYTRKG) is helix-loop-helix motif. PAS domains lie at 70–144 (SAQE…LDAD) and 203–275 (PGPG…LAEN). Residues 280–319 (AEMVVRLQAKHGGWTWIYCMLYSDGPEGPITANNYPISDT) form the PAC domain. Composition is skewed to polar residues over residues 472 to 495 (PSSA…SSAR), 502 to 518 (TPCT…STAT), and 527 to 555 (THEQ…QLSP). Positions 472 to 555 (PSSATFPDPL…SQTFPEQLSP (84 aa)) are disordered. A coiled-coil region spans residues 624 to 648 (YTEKEQNEIDRLIQQISQLAQGMDR).

As to quaternary structure, efficient DNA binding requires dimerization with another bHLH protein. Heterodimer; forms a heterodimer with ARNT, ARNT2 or BMAL1. Post-translationally, ubiquitinated, leading to degradation by the proteosome. Specifically expressed in neurons. Expressed in the lateral nucleus of the amygdala (at protein level).

Its subcellular location is the nucleus. Its function is as follows. Transcription factor expressed in neurons of the brain that regulates the excitatory-inhibitory balance within neural circuits and is required for contextual memory in the hippocampus. Plays a key role in the structural and functional plasticity of neurons. Acts as an early-response transcription factor in both excitatory and inhibitory neurons, where it induces distinct but overlapping sets of late-response genes in these two types of neurons, allowing the synapses that form on inhibitory and excitatory neurons to be modified by neuronal activity in a manner specific to their function within a circuit, thereby facilitating appropriate circuit responses to sensory experience. In excitatory neurons, activates transcription of BDNF, which in turn controls the number of GABA-releasing synapses that form on excitatory neurons, thereby promoting an increased number of inhibitory synapses on excitatory neurons. In inhibitory neurons, regulates a distinct set of target genes that serve to increase excitatory input onto somatostatin neurons, probably resulting in enhanced feedback inhibition within cortical circuits. The excitatory and inhibitory balance in neurons affects a number of processes, such as short-term and long-term memory, acquisition of experience, fear memory, response to stress and social behavior. Acts as a regulator of dendritic spine development in olfactory bulb granule cells in a sensory-experience-dependent manner by regulating expression of MDM2. Efficient DNA binding requires dimerization with another bHLH protein, such as ARNT, ARNT2 or BMAL1. Can activate the CME (CNS midline enhancer) element. This Rattus norvegicus (Rat) protein is Neuronal PAS domain-containing protein 4.